The sequence spans 82 residues: Small ribosomal subunit protein bS16 (82 aa).

This sequence belongs to the bacterial ribosomal protein bS16 family.

This chain is Small ribosomal subunit protein bS16, found in Deinococcus deserti (strain DSM 17065 / CIP 109153 / LMG 22923 / VCD115).